The following is a 359-amino-acid chain: Protein URE2 (359 aa).

Residues 39–82 (FSAGVNNNNNNSSSSNNNNNNNNNAQNNNSGRNGSQSNDNGNNI) are disordered. A compositionally biased stretch (low complexity) spans 44–81 (NNNNNNSSSSNNNNNNNNNAQNNNSGRNGSQSNDNGNN). In terms of domain architecture, GST N-terminal spans 117 to 201 (EGYTLFSHRS…HLVNKYYKET (85 aa)). In terms of domain architecture, GST C-terminal spans 210-359 (DLADQSQINA…PAVIKALRGE (150 aa)).

The protein belongs to the GST superfamily. As to quaternary structure, homodimer.

Functionally, plays an important role in the cellular response to the nitrogen source. URE2 gene plays a major part in the repression of GLN1 and GDH2 genes by glutamine, and is required for the inactivation of glutamine synthetase. URE2 gene product may catalytically inactivate GLN3 in response to an increase in the intracellular concentration of glutamine. In Saccharomyces paradoxus (Yeast), this protein is Protein URE2 (URE2).